Here is a 541-residue protein sequence, read N- to C-terminus: Zinc finger CCHC domain-containing protein 7 (541 aa).

The interval Ala-111–Gly-144 is disordered. Positions Gln-116–Val-126 are enriched in polar residues. Glycyl lysine isopeptide (Lys-Gly) (interchain with G-Cter in SUMO2) cross-links involve residues Lys-129, Lys-136, Lys-138, Lys-234, and Lys-249. 3 CCHC-type zinc fingers span residues Val-236–Leu-253, Arg-258–Ala-275, and Lys-299–Glu-316. Lys-334 participates in a covalent cross-link: Glycyl lysine isopeptide (Lys-Gly) (interchain with G-Cter in SUMO2). Residues Val-343–Glu-360 form a CCHC-type 4 zinc finger. The tract at residues Val-394–Leu-541 is disordered. Residues Lys-408 and Lys-431 each participate in a glycyl lysine isopeptide (Lys-Gly) (interchain with G-Cter in SUMO2) cross-link. The segment covering Arg-418 to Arg-434 has biased composition (basic residues). Residues Trp-435–Gly-452 are compositionally biased toward basic and acidic residues. Lys-473 is covalently cross-linked (Glycyl lysine isopeptide (Lys-Gly) (interchain with G-Cter in SUMO2)). Residues Pro-474–Ser-486 are compositionally biased toward polar residues. Ser-477 is subject to Phosphoserine. Residues Lys-484 and Lys-487 each participate in a glycyl lysine isopeptide (Lys-Gly) (interchain with G-Cter in SUMO2) cross-link. The span at Lys-487–Arg-497 shows a compositional bias: basic residues. 2 stretches are compositionally biased toward basic and acidic residues: residues Leu-498–Arg-509 and Ser-517–Phe-527. Lys-530 is covalently cross-linked (Glycyl lysine isopeptide (Lys-Gly) (interchain with G-Cter in SUMO2)). A compositionally biased stretch (basic residues) spans Lys-530 to Leu-541.

As to quaternary structure, component of a nucleolar TRAMP-like complex, an ATP-dependent exosome regulatory complex consisting of a helicase (MTREX), an oligadenylate polymerase (TENT4B or TENT4A), and a substrate specific RNA-binding factor (ZCCHC7 or ZCCHC8). Several TRAMP-like complexes exist with specific compositions and are associated with nuclear, or nucleolar RNA exosomes.

It localises to the nucleus. The protein resides in the nucleolus. The chain is Zinc finger CCHC domain-containing protein 7 (Zcchc7) from Mus musculus (Mouse).